The following is a 406-amino-acid chain: Argininosuccinate synthase (406 aa).

9–17 (AYSGGLDTS) serves as a coordination point for ATP. Residue Tyr86 coordinates L-citrulline. Gly116 lines the ATP pocket. Residues Thr118, Asn122, and Asp123 each contribute to the L-aspartate site. Asn122 is an L-citrulline binding site. L-citrulline is bound by residues Arg126, Ser174, Ser183, Glu259, and Tyr271.

Belongs to the argininosuccinate synthase family. Type 1 subfamily. As to quaternary structure, homotetramer.

The protein resides in the cytoplasm. It carries out the reaction L-citrulline + L-aspartate + ATP = 2-(N(omega)-L-arginino)succinate + AMP + diphosphate + H(+). It functions in the pathway amino-acid biosynthesis; L-arginine biosynthesis; L-arginine from L-ornithine and carbamoyl phosphate: step 2/3. This chain is Argininosuccinate synthase, found in Geobacillus kaustophilus (strain HTA426).